The sequence spans 100 residues: A-type ATP synthase subunit F (100 aa).

Belongs to the V-ATPase F subunit family. Has multiple subunits with at least A(3), B(3), C, D, E, F, H, I and proteolipid K(x).

It is found in the cell membrane. Component of the A-type ATP synthase that produces ATP from ADP in the presence of a proton gradient across the membrane. The sequence is that of A-type ATP synthase subunit F from Methanoregula boonei (strain DSM 21154 / JCM 14090 / 6A8).